The sequence spans 320 residues: L-lactate dehydrogenase A (320 aa).

The substrate site is built by arginine 88, asparagine 120, and arginine 151. Residue asparagine 120 participates in NAD(+) binding. The active-site Proton acceptor is the histidine 175.

It belongs to the LDH/MDH superfamily. LDH family. In terms of assembly, homotetramer.

It localises to the cytoplasm. The enzyme catalyses (S)-lactate + NAD(+) = pyruvate + NADH + H(+). Its pathway is fermentation; pyruvate fermentation to lactate; (S)-lactate from pyruvate: step 1/1. Its function is as follows. Converts pyruvate to lactate. The protein is L-lactate dehydrogenase A (LDHA) of Rhizopus oryzae (Mucormycosis agent).